Consider the following 153-residue polypeptide: Prostaglandin E synthase (153 aa).

The Lumenal portion of the chain corresponds to 1–13 (MPPPVLALVSGQA). A helical transmembrane segment spans residues 14–42 (LPAFLLCSTLLVIKMYVVAVITGQVRLRK). Residue Arg39 coordinates glutathione. Topologically, residues 43 to 61 (KAFANPEDALRHGGLQYCR) are cytoplasmic. The helical transmembrane segment at 62–91 (SDQDVDRCLRAHRNDMETIYPFLFLGFVYS) threads the bilayer. 74–78 (RNDME) serves as a coordination point for glutathione. The Lumenal segment spans residues 92-96 (FLGPD). A helical transmembrane segment spans residues 97 to 120 (PFIAQMHFLVFFLGRMVHTVAYLG). His114 and Tyr118 together coordinate glutathione. The Cytoplasmic segment spans residues 121-124 (KLRA). Residues 125–153 (PTRSLAYTVAQLPCASMALQIVWEAACHL) form a helical membrane-spanning segment. Residue 127–131 (RSLAY) participates in glutathione binding.

This sequence belongs to the MAPEG family. Homotrimer. Requires glutathione as cofactor.

It localises to the membrane. The protein localises to the cytoplasm. Its subcellular location is the perinuclear region. The catalysed reaction is prostaglandin H2 = prostaglandin E2. The enzyme catalyses 2-glyceryl-prostaglandin H2 = 2-glyceryl-prostaglandin E2. It catalyses the reaction prostaglandin G2 = (15S)-15-hydroperoxy-prostaglandin E2. It carries out the reaction 1-chloro-2,4-dinitrobenzene + glutathione = 2,4-dinitrophenyl-S-glutathione + chloride + H(+). The catalysed reaction is (5S)-hydroperoxy-(6E,8Z,11Z,14Z)-eicosatetraenoate + 2 glutathione = (5S)-hydroxy-(6E,8Z,11Z,14Z)-eicosatetraenoate + glutathione disulfide + H2O. It participates in lipid metabolism; prostaglandin biosynthesis. Its function is as follows. Terminal enzyme of the cyclooxygenase (COX)-2-mediated prostaglandin E2 (PGE2) biosynthetic pathway. Catalyzes the glutathione-dependent oxidoreduction of prostaglandin endoperoxide H2 (PGH2) to prostaglandin E2 (PGE2) in response to inflammatory stimuli. Plays a key role in inflammation response, fever and pain. Also catalyzes the oxidoreduction of endocannabinoids into prostaglandin glycerol esters and PGG2 into 15-hydroperoxy-PGE2. In addition, displays low glutathione transferase and glutathione-dependent peroxidase activities, toward 1-chloro-2,4-dinitrobenzene and 5-hydroperoxyicosatetraenoic acid (5-HPETE), respectively. The polypeptide is Prostaglandin E synthase (PTGES) (Canis lupus familiaris (Dog)).